Here is a 340-residue protein sequence, read N- to C-terminus: tRNA-specific 2-thiouridylase MnmA (340 aa).

ATP contacts are provided by residues 6-13 and Met-32; that span reads AMSGGVDS. Cys-92 acts as the Nucleophile in catalysis. A disulfide bridge links Cys-92 with Cys-186. An ATP-binding site is contributed by Gly-116. Residues 134–136 are interaction with tRNA; sequence KDQ. Residue Cys-186 is the Cysteine persulfide intermediate of the active site. Residues 288-289 form an interaction with tRNA region; it reads RY.

The protein belongs to the MnmA/TRMU family.

The protein resides in the cytoplasm. The catalysed reaction is S-sulfanyl-L-cysteinyl-[protein] + uridine(34) in tRNA + AH2 + ATP = 2-thiouridine(34) in tRNA + L-cysteinyl-[protein] + A + AMP + diphosphate + H(+). In terms of biological role, catalyzes the 2-thiolation of uridine at the wobble position (U34) of tRNA, leading to the formation of s(2)U34. This chain is tRNA-specific 2-thiouridylase MnmA, found in Campylobacter concisus (strain 13826).